Consider the following 320-residue polypeptide: 1,5-anhydro-D-fructose reductase (320 aa).

Tyr-40 (proton donor) is an active-site residue. His-102 is a binding site for substrate. NADP(+)-binding positions include Gln-194 and 265 to 277 (IPGS…IKEN).

This sequence belongs to the aldo/keto reductase family. Monomer.

It localises to the cytoplasm. It carries out the reaction 1,5-anhydro-D-glucitol + NADP(+) = 1,5-anhydro-D-fructose + NADPH + H(+). Its activity is regulated as follows. Inhibited by p-chloromercuribenzoic acid and alkyliodines. In terms of biological role, catalyzes the NADPH-dependent reduction of 1,5-anhydro-D-fructose (AF) to 1,5-anhydro-D-glucitol. This is 1,5-anhydro-D-fructose reductase (AKR1E2) from Macaca fascicularis (Crab-eating macaque).